The primary structure comprises 208 residues: Outer-membrane lipoprotein carrier protein (208 aa).

An N-terminal signal peptide occupies residues 1–22; that stretch reads MRKTLTALMLSLPLLTPHMAFA.

This sequence belongs to the LolA family. In terms of assembly, monomer.

Its subcellular location is the periplasm. Its function is as follows. Participates in the translocation of lipoproteins from the inner membrane to the outer membrane. Only forms a complex with a lipoprotein if the residue after the N-terminal Cys is not an aspartate (The Asp acts as a targeting signal to indicate that the lipoprotein should stay in the inner membrane). This chain is Outer-membrane lipoprotein carrier protein, found in Shewanella woodyi (strain ATCC 51908 / MS32).